We begin with the raw amino-acid sequence, 566 residues long: E3 ubiquitin-protein ligase RNF220 (566 aa).

Lysine 277 is covalently cross-linked (Glycyl lysine isopeptide (Lys-Gly) (interchain with G-Cter in SUMO2)). Residues 277–297 are disordered; that stretch reads KREGESPTASPHSSATDDLHH. Serine 390 bears the Phosphoserine mark. A coiled-coil region spans residues 485-513; the sequence is EDSAVTTFEALKARVRELERQLSRGDRYK. The tract at residues 514-522 is required for targeting to the cytoplasm; it reads CLICMDSYS. The segment at 514 to 553 adopts an RING-type zinc-finger fold; sequence CLICMDSYSMPLTSIQCWHVHCEECWLRTLGAKKLCPQCN.

Interacts with SIN3B. Interacts with CTNNB1 (via Armadillo repeats 2-8). Interacts with USP7 (via MATH domain). In terms of processing, auto-ubiquitinated; leads to proteasomal degradation. As to expression, ubiquitously expressed. Abundant in brain and spinal cord, particularly in the cerebellum and cerebral cortex. In fetal tissues expressed in the cerebellum, spinal cord and cortex.

The protein localises to the cytoplasm. It localises to the nucleus. It catalyses the reaction S-ubiquitinyl-[E2 ubiquitin-conjugating enzyme]-L-cysteine + [acceptor protein]-L-lysine = [E2 ubiquitin-conjugating enzyme]-L-cysteine + N(6)-ubiquitinyl-[acceptor protein]-L-lysine.. It participates in protein modification; protein ubiquitination. In terms of biological role, E3 ubiquitin-protein ligase that promotes the ubiquitination and proteasomal degradation of SIN3B. Independently of its E3 ligase activity, acts as a CTNNB1 stabilizer through USP7-mediated deubiquitination of CTNNB1 promoting Wnt signaling. Plays a critical role in the regulation of nuclear lamina. The protein is E3 ubiquitin-protein ligase RNF220 (RNF220) of Homo sapiens (Human).